Reading from the N-terminus, the 297-residue chain is Phosphatidylserine decarboxylase proenzyme (297 aa).

Residues Asp-90, His-147, and Ser-252 each act as charge relay system; for autoendoproteolytic cleavage activity in the active site. Ser-252 acts as the Schiff-base intermediate with substrate; via pyruvic acid; for decarboxylase activity in catalysis. Ser-252 is modified (pyruvic acid (Ser); by autocatalysis).

Belongs to the phosphatidylserine decarboxylase family. PSD-B subfamily. Prokaryotic type I sub-subfamily. As to quaternary structure, heterodimer of a large membrane-associated beta subunit and a small pyruvoyl-containing alpha subunit. Pyruvate is required as a cofactor. In terms of processing, is synthesized initially as an inactive proenzyme. Formation of the active enzyme involves a self-maturation process in which the active site pyruvoyl group is generated from an internal serine residue via an autocatalytic post-translational modification. Two non-identical subunits are generated from the proenzyme in this reaction, and the pyruvate is formed at the N-terminus of the alpha chain, which is derived from the carboxyl end of the proenzyme. The autoendoproteolytic cleavage occurs by a canonical serine protease mechanism, in which the side chain hydroxyl group of the serine supplies its oxygen atom to form the C-terminus of the beta chain, while the remainder of the serine residue undergoes an oxidative deamination to produce ammonia and the pyruvoyl prosthetic group on the alpha chain. During this reaction, the Ser that is part of the protease active site of the proenzyme becomes the pyruvoyl prosthetic group, which constitutes an essential element of the active site of the mature decarboxylase.

It localises to the cell membrane. It carries out the reaction a 1,2-diacyl-sn-glycero-3-phospho-L-serine + H(+) = a 1,2-diacyl-sn-glycero-3-phosphoethanolamine + CO2. Its pathway is phospholipid metabolism; phosphatidylethanolamine biosynthesis; phosphatidylethanolamine from CDP-diacylglycerol: step 2/2. In terms of biological role, catalyzes the formation of phosphatidylethanolamine (PtdEtn) from phosphatidylserine (PtdSer). The sequence is that of Phosphatidylserine decarboxylase proenzyme from Stutzerimonas stutzeri (strain A1501) (Pseudomonas stutzeri).